Consider the following 221-residue polypeptide: Enolase-phosphatase E1 (221 aa).

It belongs to the HAD-like hydrolase superfamily. MasA/MtnC family. As to quaternary structure, monomer. Mg(2+) is required as a cofactor.

The catalysed reaction is 5-methylsulfanyl-2,3-dioxopentyl phosphate + H2O = 1,2-dihydroxy-5-(methylsulfanyl)pent-1-en-3-one + phosphate. It functions in the pathway amino-acid biosynthesis; L-methionine biosynthesis via salvage pathway; L-methionine from S-methyl-5-thio-alpha-D-ribose 1-phosphate: step 3/6. It participates in amino-acid biosynthesis; L-methionine biosynthesis via salvage pathway; L-methionine from S-methyl-5-thio-alpha-D-ribose 1-phosphate: step 4/6. Functionally, bifunctional enzyme that catalyzes the enolization of 2,3-diketo-5-methylthiopentyl-1-phosphate (DK-MTP-1-P) into the intermediate 2-hydroxy-3-keto-5-methylthiopentenyl-1-phosphate (HK-MTPenyl-1-P), which is then dephosphorylated to form the acireductone 1,2-dihydroxy-3-keto-5-methylthiopentene (DHK-MTPene). This Xanthobacter autotrophicus (strain ATCC BAA-1158 / Py2) protein is Enolase-phosphatase E1.